Consider the following 691-residue polypeptide: DNA-directed RNA polymerase subunit beta' (691 aa).

Residues cysteine 76, cysteine 78, cysteine 94, and cysteine 97 each coordinate Zn(2+). 3 residues coordinate Mg(2+): aspartate 496, aspartate 498, and aspartate 500.

The protein belongs to the RNA polymerase beta' chain family. RpoC1 subfamily. The cofactor is Mg(2+). It depends on Zn(2+) as a cofactor.

The protein localises to the plastid. The catalysed reaction is RNA(n) + a ribonucleoside 5'-triphosphate = RNA(n+1) + diphosphate. Functionally, DNA-dependent RNA polymerase catalyzes the transcription of DNA into RNA using the four ribonucleoside triphosphates as substrates. In Cuscuta exaltata (Tall dodder), this protein is DNA-directed RNA polymerase subunit beta'.